A 267-amino-acid chain; its full sequence is MPNRDTQSQNDTPRHSPEAAEPQRDSLFAAPIAKLGDWTFDEKVAEVFPDMIQRSVPGYSNIISMIGMLAERFVQPNSQIYDLGCSLGAATLSMRRNIKAEGCKIIAVDNSPAMVERCRRHIDAFRAETPVDVVEADILDIKLENASMVVLNFTLQFLEPANRQRLLNQVYQGLRPGGALVLSEKFSFADHNVGELLFNMHHDFKRANGYSELEISQKRSMLENVMLTDSVETHKNRLHQAGFEHAEVWFQCFNFGSLIALKAGEAQ.

The span at 1–11 (MPNRDTQSQND) shows a compositional bias: polar residues. The tract at residues 1–25 (MPNRDTQSQNDTPRHSPEAAEPQRD) is disordered. Basic and acidic residues predominate over residues 12–24 (TPRHSPEAAEPQR). Residues Y59, 84–86 (GCS), 109–110 (DN), 137–138 (DI), N152, and R219 each bind S-adenosyl-L-methionine.

The protein belongs to the class I-like SAM-binding methyltransferase superfamily. Cx-SAM synthase family. As to quaternary structure, homodimer.

It catalyses the reaction prephenate + S-adenosyl-L-methionine = carboxy-S-adenosyl-L-methionine + 3-phenylpyruvate + H2O. In terms of biological role, catalyzes the conversion of S-adenosyl-L-methionine (SAM) to carboxy-S-adenosyl-L-methionine (Cx-SAM). This Yersinia pseudotuberculosis serotype O:1b (strain IP 31758) protein is Carboxy-S-adenosyl-L-methionine synthase.